Reading from the N-terminus, the 186-residue chain is Elongation factor P (186 aa).

The protein belongs to the elongation factor P family.

It localises to the cytoplasm. It participates in protein biosynthesis; polypeptide chain elongation. In terms of biological role, involved in peptide bond synthesis. Stimulates efficient translation and peptide-bond synthesis on native or reconstituted 70S ribosomes in vitro. Probably functions indirectly by altering the affinity of the ribosome for aminoacyl-tRNA, thus increasing their reactivity as acceptors for peptidyl transferase. The polypeptide is Elongation factor P (Beutenbergia cavernae (strain ATCC BAA-8 / DSM 12333 / CCUG 43141 / JCM 11478 / NBRC 16432 / NCIMB 13614 / HKI 0122)).